We begin with the raw amino-acid sequence, 128 residues long: SH2 domain-containing protein 1A (128 aa).

The SH2 domain maps to 6–102 (VYHGKISRET…GIVIPLQYPV (97 aa)). The segment at 67-92 (ETAPGVHKRYFRKIKNLISAFQKPDQ) is interaction with FYN SH3 domain. An N6-acetyllysine modification is found at lysine 89. Residues 106 to 128 (SSARSTQGTTGIREDPDVCLKAP) form a disordered region. Residues 117 to 128 (IREDPDVCLKAP) show a composition bias toward basic and acidic residues.

Interacts with CD84, CD244, LY9, SLAMF1 and FYN. Interacts with NTRK1, NTRK2 and NTRK3.

The protein resides in the cytoplasm. In terms of biological role, cytoplasmic adapter regulating receptors of the signaling lymphocytic activation molecule (SLAM) family such as SLAMF1, CD244, LY9, CD84, SLAMF6 and SLAMF7. In SLAM signaling seems to cooperate with SH2D1B/EAT-2. Initially it has been proposed that association with SLAMF1 prevents SLAMF1 binding to inhibitory effectors including INPP5D/SHIP1 and PTPN11/SHP-2. However, by simultaneous interactions, recruits FYN which subsequently phosphorylates and activates SLAMF1. Positively regulates CD244/2B4- and CD84-mediated natural killer (NK) cell functions. Can also promote CD48-, SLAMF6 -, LY9-, and SLAMF7-mediated NK cell activation. In the context of NK cell-mediated cytotoxicity enhances conjugate formation with target cells. May also regulate the activity of the neurotrophin receptors NTRK1, NTRK2 and NTRK3. The sequence is that of SH2 domain-containing protein 1A (SH2D1A) from Macaca mulatta (Rhesus macaque).